The following is a 316-amino-acid chain: Methionyl-tRNA formyltransferase (316 aa).

111-114 (SLLP) serves as a coordination point for (6S)-5,6,7,8-tetrahydrofolate.

This sequence belongs to the Fmt family.

It catalyses the reaction L-methionyl-tRNA(fMet) + (6R)-10-formyltetrahydrofolate = N-formyl-L-methionyl-tRNA(fMet) + (6S)-5,6,7,8-tetrahydrofolate + H(+). Attaches a formyl group to the free amino group of methionyl-tRNA(fMet). The formyl group appears to play a dual role in the initiator identity of N-formylmethionyl-tRNA by promoting its recognition by IF2 and preventing the misappropriation of this tRNA by the elongation apparatus. The polypeptide is Methionyl-tRNA formyltransferase (Limosilactobacillus fermentum (strain NBRC 3956 / LMG 18251) (Lactobacillus fermentum)).